The following is a 392-amino-acid chain: Major outer membrane protein P.IA (392 aa).

The N-terminal stretch at 1–19 is a signal peptide; the sequence is MRKKLTALVLSALPLAAVA.

The protein belongs to the Gram-negative porin family. Homotrimer.

It localises to the cell outer membrane. In terms of biological role, serves as a slightly cation selective porin. Major antigen on the gonococcal cell surface and it may have pathogenic properties in addition to its porin activity. The chain is Major outer membrane protein P.IA (porA) from Neisseria meningitidis serogroup B (strain ATCC BAA-335 / MC58).